The sequence spans 155 residues: 6,7-dimethyl-8-ribityllumazine synthase (155 aa).

5-amino-6-(D-ribitylamino)uracil contacts are provided by residues Phe23, 57 to 59 (AFE), and 81 to 83 (AVI). Residue 86 to 87 (ST) coordinates (2S)-2-hydroxy-3-oxobutyl phosphate. His89 functions as the Proton donor in the catalytic mechanism. Phe114 contacts 5-amino-6-(D-ribitylamino)uracil. Residue Arg128 coordinates (2S)-2-hydroxy-3-oxobutyl phosphate.

Belongs to the DMRL synthase family.

It catalyses the reaction (2S)-2-hydroxy-3-oxobutyl phosphate + 5-amino-6-(D-ribitylamino)uracil = 6,7-dimethyl-8-(1-D-ribityl)lumazine + phosphate + 2 H2O + H(+). Its pathway is cofactor biosynthesis; riboflavin biosynthesis; riboflavin from 2-hydroxy-3-oxobutyl phosphate and 5-amino-6-(D-ribitylamino)uracil: step 1/2. Catalyzes the formation of 6,7-dimethyl-8-ribityllumazine by condensation of 5-amino-6-(D-ribitylamino)uracil with 3,4-dihydroxy-2-butanone 4-phosphate. This is the penultimate step in the biosynthesis of riboflavin. This chain is 6,7-dimethyl-8-ribityllumazine synthase, found in Geobacter metallireducens (strain ATCC 53774 / DSM 7210 / GS-15).